Reading from the N-terminus, the 382-residue chain is uncharacterized protein (382 aa).

The next 12 helical transmembrane spans lie at 8 to 28, 45 to 65, 75 to 95, 102 to 122, 131 to 151, 157 to 177, 204 to 224, 231 to 251, 270 to 290, 291 to 311, 325 to 345, and 349 to 369; these read VMLL…LNTL, MVSS…GYLI, YLAS…VGFW, FIAG…LMCS, LLAA…LLVS, LLHV…PLLF, LGVN…GLMP, GMAN…GILG, VQVF…AMAP, ALFI…AWAC, ALLL…AMLM, and SDNL…LMLL.

It belongs to the major facilitator superfamily. YcaD (TC 2.A.1.26) family.

The protein localises to the cell inner membrane. This is an uncharacterized protein from Salmonella enteritidis PT4 (strain P125109).